Consider the following 171-residue polypeptide: Orotate phosphoribosyltransferase (171 aa).

5-phospho-alpha-D-ribose 1-diphosphate is bound by residues R85, K86, R88, H90, and 110-118 (EDVVTTGNS). Residues T114 and R142 each contribute to the orotate site.

Belongs to the purine/pyrimidine phosphoribosyltransferase family. PyrE subfamily. In terms of assembly, homodimer. Mg(2+) serves as cofactor.

The catalysed reaction is orotidine 5'-phosphate + diphosphate = orotate + 5-phospho-alpha-D-ribose 1-diphosphate. It functions in the pathway pyrimidine metabolism; UMP biosynthesis via de novo pathway; UMP from orotate: step 1/2. Its function is as follows. Catalyzes the transfer of a ribosyl phosphate group from 5-phosphoribose 1-diphosphate to orotate, leading to the formation of orotidine monophosphate (OMP). The polypeptide is Orotate phosphoribosyltransferase (Thermoplasma acidophilum (strain ATCC 25905 / DSM 1728 / JCM 9062 / NBRC 15155 / AMRC-C165)).